A 67-amino-acid polypeptide reads, in one-letter code: Prokaryotic ubiquitin-like protein Pup (67 aa).

Low complexity predominate over residues 1–13 (MAGQEQQQPQSRD). Residues 1–48 (MAGQEQQQPQSRDSQVDEDIPEAPPAPPEAQASASTEGVDDLLDEIDG) form a disordered region. Residues 25–61 (PAPPEAQASASTEGVDDLLDEIDGVLESNAEEFVRAF) are ARC ATPase binding. Residues 38–48 (GVDDLLDEIDG) are compositionally biased toward acidic residues. Gln67 bears the Deamidated glutamine mark. Gln67 participates in a covalent cross-link: Isoglutamyl lysine isopeptide (Gln-Lys) (interchain with K-? in acceptor proteins).

It belongs to the prokaryotic ubiquitin-like protein family. As to quaternary structure, strongly interacts with the proteasome-associated ATPase ARC through a hydrophobic interface; the interacting region of Pup lies in its C-terminal half. There is one Pup binding site per ARC hexamer ring. Is modified by deamidation of its C-terminal glutamine to glutamate by the deamidase Dop, a prerequisite to the subsequent pupylation process.

Its pathway is protein degradation; proteasomal Pup-dependent pathway. Functionally, protein modifier that is covalently attached to lysine residues of substrate proteins, thereby targeting them for proteasomal degradation. The tagging system is termed pupylation. In Pseudarthrobacter chlorophenolicus (strain ATCC 700700 / DSM 12829 / CIP 107037 / JCM 12360 / KCTC 9906 / NCIMB 13794 / A6) (Arthrobacter chlorophenolicus), this protein is Prokaryotic ubiquitin-like protein Pup.